A 122-amino-acid polypeptide reads, in one-letter code: Basic phospholipase A2 CbII (122 aa).

7 disulfide bridges follow: Cys-26-Cys-115, Cys-28-Cys-44, Cys-43-Cys-95, Cys-49-Cys-122, Cys-50-Cys-88, Cys-57-Cys-81, and Cys-75-Cys-86. 3 residues coordinate Ca(2+): Tyr-27, Gly-29, and Gly-31. His-47 is an active-site residue. Ca(2+) is bound at residue Asp-48. Asp-89 is a catalytic residue.

It belongs to the phospholipase A2 family. Group I subfamily. D49 sub-subfamily. In terms of assembly, heterodimer of an acidic subunit (CbIalpha or CbIbeta) and a basic subunit (CbII). The acidic subunit is non-toxic, and increases the toxicity of the basic subunit. It depends on Ca(2+) as a cofactor. In terms of tissue distribution, expressed by the venom gland.

The protein resides in the secreted. The catalysed reaction is a 1,2-diacyl-sn-glycero-3-phosphocholine + H2O = a 1-acyl-sn-glycero-3-phosphocholine + a fatty acid + H(+). Its function is as follows. Heterodimer: presynaptic neurotoxin. Monomer: Snake venom phospholipase A2 (PLA2) that exhibits strong anticoagulant effects by binding to factor Xa (F10) and inhibiting the prothrombinase activity (IC(50) is 20 nM). PLA2 catalyzes the calcium-dependent hydrolysis of the 2-acyl groups in 3-sn-phosphoglycerides. This is Basic phospholipase A2 CbII from Pseudocerastes fieldi (Field's horned viper).